The chain runs to 308 residues: Probable manganese-dependent inorganic pyrophosphatase (308 aa).

Mn(2+)-binding residues include His-9, Asp-13, Asp-15, Asp-75, His-97, and Asp-149.

It belongs to the PPase class C family. The cofactor is Mn(2+).

The protein resides in the cytoplasm. It carries out the reaction diphosphate + H2O = 2 phosphate + H(+). The sequence is that of Probable manganese-dependent inorganic pyrophosphatase from Listeria innocua serovar 6a (strain ATCC BAA-680 / CLIP 11262).